The following is a 506-amino-acid chain: Histidine ammonia-lyase (506 aa).

The segment at residues 144 to 146 (ASG) is a cross-link (5-imidazolinone (Ala-Gly)). 2,3-didehydroalanine (Ser) is present on serine 145.

The protein belongs to the PAL/histidase family. Contains an active site 4-methylidene-imidazol-5-one (MIO), which is formed autocatalytically by cyclization and dehydration of residues Ala-Ser-Gly.

It is found in the cytoplasm. It carries out the reaction L-histidine = trans-urocanate + NH4(+). The protein operates within amino-acid degradation; L-histidine degradation into L-glutamate; N-formimidoyl-L-glutamate from L-histidine: step 1/3. The chain is Histidine ammonia-lyase from Legionella pneumophila (strain Paris).